We begin with the raw amino-acid sequence, 493 residues long: Galactose-1-phosphate uridylyltransferase (493 aa).

Belongs to the galactose-1-phosphate uridylyltransferase type 2 family.

It localises to the cytoplasm. It catalyses the reaction alpha-D-galactose 1-phosphate + UDP-alpha-D-glucose = alpha-D-glucose 1-phosphate + UDP-alpha-D-galactose. The protein operates within carbohydrate metabolism; galactose metabolism. This Streptococcus pneumoniae serotype 19F (strain G54) protein is Galactose-1-phosphate uridylyltransferase.